A 597-amino-acid chain; its full sequence is Ribosomal oxygenase 1 (597 aa).

Met1 carries the N-acetylmethionine modification. Residues 1–138 (MDELPNGNGA…HVDDPERPWD (138 aa)) are disordered. Basic residues-rich tracts occupy residues 14-24 (KRGRGRRRRQP) and 37-48 (RPRKVRRHRKSA). Low complexity predominate over residues 49–62 (ASRVAALRARALLS). Phosphoserine is present on residues Ser62 and Ser65. Residues 72 to 81 (VRGKRERPAE) are compositionally biased toward basic and acidic residues. Ser86 bears the Phosphoserine mark. Residues 250–395 (CSLRLLCPQA…DFLEAVLPLA (146 aa)) form the JmjC domain. Residues His296, Asp298, and His361 each contribute to the Fe cation site.

It belongs to the ROX family. NO66 subfamily. As to quaternary structure, interacts with SP7/OSX; the interaction is direct. Interacts with MYC. Interacts with PHF19; leading to its recruitment to H3K36me3 sites. Fe(2+) is required as a cofactor.

It localises to the nucleus. Its subcellular location is the nucleolus. It is found in the nucleoplasm. The enzyme catalyses N(6),N(6)-dimethyl-L-lysyl(36)-[histone H3] + 2 2-oxoglutarate + 2 O2 = L-lysyl(36)-[histone H3] + 2 formaldehyde + 2 succinate + 2 CO2. It catalyses the reaction N(6)-methyl-L-lysyl-[protein] + 2-oxoglutarate + O2 = L-lysyl-[protein] + formaldehyde + succinate + CO2. It carries out the reaction L-histidyl-[protein] + 2-oxoglutarate + O2 = (3S)-3-hydroxy-L-histidyl-[protein] + succinate + CO2. Oxygenase that can act as both a histone lysine demethylase and a ribosomal histidine hydroxylase. Specifically demethylates 'Lys-4' (H3K4me) and 'Lys-36' (H3K36me) of histone H3, thereby playing a central role in histone code. Preferentially demethylates trimethylated H3 'Lys-4' (H3K4me3) and monomethylated H3 'Lys-4' (H3K4me1) residues, while it has weaker activity for dimethylated H3 'Lys-36' (H3K36me2). Acts as a regulator of osteoblast differentiation via its interaction with SP7/OSX by demethylating H3K4me and H3K36me, thereby inhibiting SP7/OSX-mediated promoter activation. Also catalyzes demethylation of non-histone proteins, such as CGAS: demethylation of monomethylated CGAS promotes interaction between CGAS and PARP1, followed by PARP1 inactivation. Also catalyzes the hydroxylation of 60S ribosomal protein L8 on 'His-216', thereby playing a role in ribosome biogenesis. Participates in MYC-induced transcriptional activation. The polypeptide is Ribosomal oxygenase 1 (Rattus norvegicus (Rat)).